Consider the following 203-residue polypeptide: Small ribosomal subunit protein uS5 (203 aa).

The S5 DRBM domain maps to 51–114 (LEDEVLDITM…ENAKLNVVRI (64 aa)).

Belongs to the universal ribosomal protein uS5 family. As to quaternary structure, part of the 30S ribosomal subunit. Contacts protein S4.

With S4 and S12 plays an important role in translational accuracy. This Methanothrix thermoacetophila (strain DSM 6194 / JCM 14653 / NBRC 101360 / PT) (Methanosaeta thermophila) protein is Small ribosomal subunit protein uS5.